We begin with the raw amino-acid sequence, 411 residues long: Probable peptidoglycan glycosyltransferase FtsW (411 aa).

Topologically, residues 1 to 40 (MLERMLPFLGRKRDKAAADLPVRVGHSAPRNSRMLEYDQN) are cytoplasmic. Residues 41-61 (LVWVTLLLLAYGLVMVYSATI) form a helical membrane-spanning segment. At 62–81 (SFHDSPRYAQWSPYHYFIRD) the chain is on the periplasmic side. The chain crosses the membrane as a helical span at residues 82–102 (LFSIAAALLASWIVVQIPMAE). The Cytoplasmic portion of the chain corresponds to 103–109 (LQKWSMR). The chain crosses the membrane as a helical span at residues 110–130 (FFFLSLIGLVLVLLPHIGKDV). Residues 131 to 136 (NGSKRW) are Periplasmic-facing. The chain crosses the membrane as a helical span at residues 137-157 (VVFPGGLNFQPSELVKLTALI). Residues 158 to 172 (YAADFMVRKQEVKQS) are Cytoplasmic-facing. Residues 173–193 (LLKTFLPMMAVMMIVGVLLLA) form a helical membrane-spanning segment. Topologically, residues 194–196 (EPD) are periplasmic. The helical transmembrane segment at 197-217 (MGAFLVIASITLAILFLGGAN) threads the bilayer. Over 218-219 (GK) the chain is Cytoplasmic. A helical transmembrane segment spans residues 220–240 (LFSVFSVAVIGAFVLMIVLSP). The Periplasmic portion of the chain corresponds to 241-298 (WRRDRIFAYLNPWSESNALGSAYQLSHALIAMGRGEWFGVGLGGSIEKLHYLPEAHTD). The helical transmembrane segment at 299-319 (FLLAIIGEELGLVGVGVVIFA) threads the bilayer. Over 320 to 347 (FYWIVRRAFDIGRQALVLDRMYSALVAQ) the chain is Cytoplasmic. Residues 348–368 (GIGVWIGGQAFINIGVNLGLL) traverse the membrane as a helical segment. The Periplasmic segment spans residues 369–374 (PTKGLT). Residues 375–395 (LPLMSYGGSALLLNCMAIAVL) traverse the membrane as a helical segment. At 396–411 (LRVDFENRILMRGGHV) the chain is on the cytoplasmic side.

The protein belongs to the SEDS family. FtsW subfamily.

It is found in the cell inner membrane. It carries out the reaction [GlcNAc-(1-&gt;4)-Mur2Ac(oyl-L-Ala-gamma-D-Glu-L-Lys-D-Ala-D-Ala)](n)-di-trans,octa-cis-undecaprenyl diphosphate + beta-D-GlcNAc-(1-&gt;4)-Mur2Ac(oyl-L-Ala-gamma-D-Glu-L-Lys-D-Ala-D-Ala)-di-trans,octa-cis-undecaprenyl diphosphate = [GlcNAc-(1-&gt;4)-Mur2Ac(oyl-L-Ala-gamma-D-Glu-L-Lys-D-Ala-D-Ala)](n+1)-di-trans,octa-cis-undecaprenyl diphosphate + di-trans,octa-cis-undecaprenyl diphosphate + H(+). Its pathway is cell wall biogenesis; peptidoglycan biosynthesis. Its function is as follows. Peptidoglycan polymerase that is essential for cell division. This is Probable peptidoglycan glycosyltransferase FtsW from Thiomonas intermedia (strain K12) (Thiobacillus intermedius).